The primary structure comprises 543 residues: MASAAEAVEELTRLYRELPPRPAVEEVEAAEAVLASADAEEAARLDEVAREEASASASSSAAAPGRADGELLAVLREARRNAVRLRALQQRKEAAYVVELERRFKVFDDLIQRASRVVSSSSDAAEAGGGTTGDGYVGVGADSVDLEMELRKKEAAVAAAAAVAEMERGSKGLAALGLESKPISSLRRDVSAGTDMEKLSLIQVASLIESSAKKGITELSLRGKLVDQIEWLPVSLGKLQDVTELDLSENRIMALPSTIGSLRYLTKLDLHSNQLINLPDAFGELSNLIDLDLHANQLKSLPSSFGNLTSLANLDLSSNMLKALPDCLGKLANLRRLIVETNELEELPYTIGSCTSLVELRLDFNQLKALPEAIGKLEKLEILTLHYNRIKGLPTTVGSLSRLRELDVSFNEVEVIPENICFATSLVKLNLSRNFADLRALPKSIGNLEMLEELDISSNQIRVLPDSFRCLSRLRVFHADETPLEFPPREVVKLGAQAVVKYMNDLNAARGTNQKKTDRGSFWTWLFSLFGCCKKNQEVGLPV.

10 LRR repeats span residues Leu-239–Leu-262, Tyr-264–Glu-284, Leu-285–Asn-307, Thr-309–Leu-331, Ala-332–Cys-354, Ser-356–Leu-377, Glu-378–Leu-400, Arg-402–Thr-424, Leu-426–Leu-448, and Glu-449–Cys-470. The stretch at Ser-472–Leu-494 is one LRR 11; degenerate repeat. The GVYW; degenerate signature appears at Gly-495–Tyr-502.

Belongs to the SHOC2 family. In terms of tissue distribution, widely expressed.

Leucine-rich repeat protein that likely mediates protein interactions, possibly in the context of signal transduction. In Oryza sativa subsp. japonica (Rice), this protein is Plant intracellular Ras-group-related LRR protein 5 (IRL5).